Consider the following 717-residue polypeptide: Cell division cycle protein 27 homolog A (717 aa).

Residues 198–208 show a composition bias toward polar residues; sequence TEHIPGENQQD. Disordered stretches follow at residues 198–217, 282–315, and 342–374; these read TEHI…QPGD, LSAE…KDSH, and SKEA…SPDR. Over residues 293–304 the composition is skewed to basic residues; that stretch reads RRSARIAARKKN. A compositionally biased stretch (polar residues) spans 342 to 356; the sequence is SKEATTSGQSVSDIG. TPR repeat units lie at residues 421–454, 489–522, 524–556, 557–590, 592–624, 625–658, and 659–692; these read HWVL…YPYA, PESW…NERF, YAHT…DTRH, YNAW…NPRS, VIMC…DAKN, PLPK…APQE, and SSVH…SPSP.

Belongs to the APC3/CDC27 family. The APC/C is composed of at least 10 subunits. Interacts with APC2 and APC10.

It is found in the nucleus. The protein operates within protein modification; protein ubiquitination. Its function is as follows. Component of the anaphase promoting complex/cyclosome (APC/C), a cell cycle-regulated E3 ubiquitin-protein ligase complex that controls progression through mitosis and the G1 phase of the cell cycle. The APC/C complex controls several key steps in the cell cycle by mediating ubiquitination and subsequent degradation of target proteins such as cyclins. The APC/C complex is required for the female gametophyte development and is involved in several aspect of development by controlling cell division and cell elongation. Involved in the control of endoreduplication. Functionally redundant with CDC27B in the control of gametophyte development. The protein is Cell division cycle protein 27 homolog A (CDC27A) of Arabidopsis thaliana (Mouse-ear cress).